Reading from the N-terminus, the 328-residue chain is tRNA dimethylallyltransferase (328 aa).

10 to 17 (GPTASGKT) provides a ligand contact to ATP. Substrate is bound at residue 12-17 (TASGKT).

It belongs to the IPP transferase family. In terms of assembly, monomer. Mg(2+) is required as a cofactor.

It catalyses the reaction adenosine(37) in tRNA + dimethylallyl diphosphate = N(6)-dimethylallyladenosine(37) in tRNA + diphosphate. Its function is as follows. Catalyzes the transfer of a dimethylallyl group onto the adenine at position 37 in tRNAs that read codons beginning with uridine, leading to the formation of N6-(dimethylallyl)adenosine (i(6)A). In Bifidobacterium longum subsp. infantis (strain ATCC 15697 / DSM 20088 / JCM 1222 / NCTC 11817 / S12), this protein is tRNA dimethylallyltransferase.